We begin with the raw amino-acid sequence, 385 residues long: GTP cyclohydrolase-2 (385 aa).

The tract at residues 1–189 (MYADAPSDSA…RDIADYRVHV (189 aa)) is DHBP synthase-like. The GTP cyclohydrolase II stretch occupies residues 190–385 (VRTLRRVAEA…TKAERSGHMF (196 aa)). 240-244 (RLHSE) lines the GTP pocket. The Zn(2+) site is built by Cys245, Cys256, and Cys258. Residues Gln261, 283–285 (EGR), and Thr305 contribute to the GTP site. Asp317 serves as the catalytic Proton acceptor. Arg319 acts as the Nucleophile in catalysis. GTP-binding residues include Thr340 and Lys345.

In the N-terminal section; belongs to the DHBP synthase family. This sequence in the C-terminal section; belongs to the GTP cyclohydrolase II family. The cofactor is Zn(2+).

It catalyses the reaction GTP + 4 H2O = 2,5-diamino-6-hydroxy-4-(5-phosphoribosylamino)-pyrimidine + formate + 2 phosphate + 3 H(+). It functions in the pathway cofactor biosynthesis; riboflavin biosynthesis; 5-amino-6-(D-ribitylamino)uracil from GTP: step 1/4. Catalyzes the conversion of GTP to 2,5-diamino-6-ribosylamino-4(3H)-pyrimidinone 5'-phosphate (DARP), formate and pyrophosphate. This chain is GTP cyclohydrolase-2 (ribA), found in Azospirillum brasilense.